A 219-amino-acid chain; its full sequence is MGYFITFEGIEGSGKTTQIGLLGEQLESLGYSVVMTREPGGCAISDKIRSILLDADNSSISPMTELLLYAAARAQHVSEVIIPALKQGNIVLCDRFSDATLAYQGSGRGIAREKVDTLNQLACQSLRPDLTVLIDCDVSVGLERARRRIETASGPREERFELEALEFHRSVREAYLELAHAEPQRFITVDGSGGVEEISEAIVAQVLQNRLNNTSHALL.

Residue 9 to 16 coordinates ATP; it reads GIEGSGKT.

This sequence belongs to the thymidylate kinase family.

The catalysed reaction is dTMP + ATP = dTDP + ADP. In terms of biological role, phosphorylation of dTMP to form dTDP in both de novo and salvage pathways of dTTP synthesis. This chain is Thymidylate kinase, found in Pelobacter propionicus (strain DSM 2379 / NBRC 103807 / OttBd1).